A 287-amino-acid chain; its full sequence is Inositol-1-monophosphatase (287 aa).

Mg(2+) contacts are provided by E79, D96, L98, and D99. Residue E79 coordinates substrate. Residues L98 to T101, R195, and D224 contribute to the substrate site. Mg(2+) is bound at residue D224.

This sequence belongs to the inositol monophosphatase superfamily. It depends on Mg(2+) as a cofactor.

It catalyses the reaction a myo-inositol phosphate + H2O = myo-inositol + phosphate. The polypeptide is Inositol-1-monophosphatase (suhB) (Synechocystis sp. (strain ATCC 27184 / PCC 6803 / Kazusa)).